Reading from the N-terminus, the 60-residue chain is Large ribosomal subunit protein bL32 (60 aa).

It belongs to the bacterial ribosomal protein bL32 family.

This is Large ribosomal subunit protein bL32 from Fervidobacterium nodosum (strain ATCC 35602 / DSM 5306 / Rt17-B1).